A 334-amino-acid polypeptide reads, in one-letter code: GTP 3',8-cyclase (334 aa).

Residues 11-236 form the Radical SAM core domain; the sequence is GFNRKIDYLR…ESTESSMGPA (226 aa). GTP is bound at residue Arg20. Residues Cys27 and Cys31 each coordinate [4Fe-4S] cluster. Tyr33 serves as a coordination point for S-adenosyl-L-methionine. Cys34 contacts [4Fe-4S] cluster. Residue Arg69 participates in GTP binding. Residue Gly73 participates in S-adenosyl-L-methionine binding. Position 100 (Thr100) interacts with GTP. Position 124 (Ser124) interacts with S-adenosyl-L-methionine. Lys161 contacts GTP. An S-adenosyl-L-methionine-binding site is contributed by Met195. [4Fe-4S] cluster is bound by residues Cys260 and Cys263. GTP is bound at residue 265–267; it reads RVR. Cys277 lines the [4Fe-4S] cluster pocket.

Belongs to the radical SAM superfamily. MoaA family. As to quaternary structure, monomer and homodimer. The cofactor is [4Fe-4S] cluster.

The catalysed reaction is GTP + AH2 + S-adenosyl-L-methionine = (8S)-3',8-cyclo-7,8-dihydroguanosine 5'-triphosphate + 5'-deoxyadenosine + L-methionine + A + H(+). It participates in cofactor biosynthesis; molybdopterin biosynthesis. Functionally, catalyzes the cyclization of GTP to (8S)-3',8-cyclo-7,8-dihydroguanosine 5'-triphosphate. In Pseudomonas putida (strain ATCC 700007 / DSM 6899 / JCM 31910 / BCRC 17059 / LMG 24140 / F1), this protein is GTP 3',8-cyclase.